The primary structure comprises 377 residues: Prostaglandin E synthase 2 (377 aa).

Residues 1 to 57 are Lumenal-facing; that stretch reads MDPAARVVRALWPGGCALAWRLGGRPQPLLPTQSRAGFAGAAGGPSPVAAARKGSPR. Residues 58-74 traverse the membrane as a helical segment; that stretch reads LLGAAALALGGALGLYH. Topologically, residues 75–377 are cytoplasmic; sequence TARWHLRAQD…RAITEASPAH (303 aa). One can recognise a Glutaredoxin domain in the interval 90–193; the sequence is SAAQLSLSSR…EIITYYPAMK (104 aa). Serine 95 is subject to Phosphoserine. Glutathione contacts are provided by residues valine 148 and 164–165; that span reads DS. The GST C-terminal domain occupies 263–377; it reads YIVREGKFGA…RAITEASPAH (115 aa).

Belongs to the GST superfamily. Homodimer. May interact with CEBPB. Interacts with EXOSC10. Synthesized as a Golgi membrane-associated protein, and the proteolytic removal of the N-terminal hydrophobic domain leads to the formation of a mature cytosolic enzyme. As to expression, widely expressed. Expressed in the heart, including apex, inter-ventricular septum, both atria and ventricles, but not in the aorta. Also expressed in fetal heart. Detected in various regions of the brain: cerebellum; occipital, frontal and parietal lobes. Also expressed in the lymph nodes, skeletal muscle, kidney and trachea, but not in the thymus or lung. Overexpressed in colorectal cancer.

It localises to the golgi apparatus membrane. The protein localises to the cytoplasm. The protein resides in the perinuclear region. It carries out the reaction prostaglandin H2 = prostaglandin E2. The enzyme catalyses prostaglandin H2 = (12S)-hydroxy-(5Z,8E,10E)-heptadecatrienoate + malonaldehyde. Its pathway is lipid metabolism; prostaglandin biosynthesis. With respect to regulation, isomerase activity is increased by sulfhydril compounds. Dithiothreitol (DTT) is most effective, followed by dihydrolipoic acid, glutathione (GSH) and 2-mercaptoethanol. Isomerase that catalyzes the conversion of PGH2 into the more stable prostaglandin E2 (PGE2) (in vitro). The biological function and the GSH-dependent property of PTGES2 is still under debate. In vivo, PTGES2 could form a complex with GSH and heme and would not participate in PGE2 synthesis but would catalyze the degradation of prostaglandin E2 H2 (PGH2) to 12(S)-hydroxy-5(Z),8(E),10(E)-heptadecatrienoic acid (HHT) and malondialdehyde (MDA). This Homo sapiens (Human) protein is Prostaglandin E synthase 2 (PTGES2).